Reading from the N-terminus, the 1431-residue chain is Caskin-1 (1431 aa).

ANK repeat units lie at residues 48-77, 81-110, 114-143, 147-176, 188-217, and 220-249; these read DGFS…AVDI, KGMR…AVNV, EGHI…NPCM, SGKT…CAAL, NGTS…DINR, and KSGT…NAQV. At Tyr253 the chain carries Phosphotyrosine. Positions 281–347 constitute an SH3 domain; the sequence is SAALQVRATK…PSSLGEAIVK (67 aa). Residues 348 to 372 form a disordered region; the sequence is RAGSRTGSEPSPPQGGGSLGPSAPP. Residue Ser358 is modified to Phosphoserine. The segment at 375-471 is CASK-binding; it reads IWVLRKPFAG…PKKLESASAS (97 aa). Arg398 carries the post-translational modification Omega-N-methylarginine. Positions 420–430 are enriched in polar residues; that stretch reads SQKSVSESSPG. The disordered stretch occupies residues 420 to 471; the sequence is SQKSVSESSPGDSPVKPPEGSSGAARSQPPAAHAGQVYGEQPPKKLESASAS. A phosphoserine mark is found at Ser423 and Ser432. 2 consecutive SAM domains span residues 476 to 539 and 545 to 609; these read KSAE…LNIP and HKPA…LAEL. Ser637 and Ser650 each carry phosphoserine. The span at 669–679 shows a compositional bias: low complexity; sequence LSGPAEAGAAA. Disordered stretches follow at residues 669 to 1000 and 1016 to 1041; these read LSGP…TGSA and GGGG…EPGR. Polar residues predominate over residues 692–712; the sequence is RTTSRESSLSGRARHISSSQE. Ser723 and Ser728 each carry phosphoserine. Thr741 carries the post-translational modification Phosphothreonine. Position 791 is a phosphoserine (Ser791). Over residues 848 to 860 the composition is skewed to pro residues; sequence PPAPGPAPPPVPA. Ser891, Ser893, and Ser989 each carry phosphoserine. The span at 1028–1037 shows a compositional bias: pro residues; that stretch reads GHPTPRPASP. Thr1067 is modified (phosphothreonine). Ser1069 carries the post-translational modification Phosphoserine. 2 disordered regions span residues 1072–1372 and 1389–1410; these read VTGL…RQKL and KIRQ…STGS. Positions 1148 to 1160 are enriched in basic and acidic residues; it reads DTVKRRPKAKEPD. The span at 1191 to 1215 shows a compositional bias: pro residues; the sequence is PELPPPPPPAEPPPADLMQLPPLPL. The span at 1236–1247 shows a compositional bias: polar residues; the sequence is QPVSKIQGSPTP. A Phosphoserine modification is found at Ser1259. At Thr1268 the chain carries Phosphothreonine. The span at 1268–1283 shows a compositional bias: pro residues; sequence TPPPVSPKPPPPPTAP. Low complexity-rich tracts occupy residues 1284–1299, 1309–1327, and 1345–1359; these read KPAK…SATP, PPAA…SASP, and PRAA…PVAS. At Ser1363 the chain carries Phosphoserine. Basic and acidic residues predominate over residues 1389–1407; sequence KIRQEDGQGPRPSSIEEKS.

As to quaternary structure, binds the CaM kinase domain of CASK. Forms a ternary complex with CASK and LIN7A, LIN7B or LIN7C. Competes with APBA1 that forms a similar complex with CASK and LIN7 proteins. The tripartite complex CASKIN1/CASK/LIN7(A/B/C) binds the cytoplasmic tail of NRXN1. Polymerizes, via the tandem SAM domains, to form long, 8 nM wide fibers, upon which other proteins can assemble.

The protein localises to the cytoplasm. Functionally, may link the scaffolding protein CASK to downstream intracellular effectors. The polypeptide is Caskin-1 (Caskin1) (Mus musculus (Mouse)).